Consider the following 500-residue polypeptide: Probable cytosol aminopeptidase (500 aa).

Mn(2+)-binding residues include Lys261 and Asp266. Residue Lys273 is part of the active site. Residues Asp284, Asp343, and Glu345 each contribute to the Mn(2+) site. The active site involves Arg347.

It belongs to the peptidase M17 family. It depends on Mn(2+) as a cofactor.

It is found in the cytoplasm. The enzyme catalyses Release of an N-terminal amino acid, Xaa-|-Yaa-, in which Xaa is preferably Leu, but may be other amino acids including Pro although not Arg or Lys, and Yaa may be Pro. Amino acid amides and methyl esters are also readily hydrolyzed, but rates on arylamides are exceedingly low.. The catalysed reaction is Release of an N-terminal amino acid, preferentially leucine, but not glutamic or aspartic acids.. Its function is as follows. Presumably involved in the processing and regular turnover of intracellular proteins. Catalyzes the removal of unsubstituted N-terminal amino acids from various peptides. This Bacillus subtilis (strain 168) protein is Probable cytosol aminopeptidase (pepA).